Consider the following 462-residue polypeptide: L-seryl-tRNA(Sec) selenium transferase (462 aa).

Lysine 293 carries the N6-(pyridoxal phosphate)lysine modification.

The protein belongs to the SelA family. The cofactor is pyridoxal 5'-phosphate.

The protein resides in the cytoplasm. The enzyme catalyses L-seryl-tRNA(Sec) + selenophosphate + H(+) = L-selenocysteinyl-tRNA(Sec) + phosphate. The protein operates within aminoacyl-tRNA biosynthesis; selenocysteinyl-tRNA(Sec) biosynthesis; selenocysteinyl-tRNA(Sec) from L-seryl-tRNA(Sec) (bacterial route): step 1/1. Its function is as follows. Converts seryl-tRNA(Sec) to selenocysteinyl-tRNA(Sec) required for selenoprotein biosynthesis. The sequence is that of L-seryl-tRNA(Sec) selenium transferase from Clostridium botulinum (strain ATCC 19397 / Type A).